The sequence spans 185 residues: Ribosome maturation factor RimM (185 aa).

A PRC barrel domain is found at 96-171 (EDEFYHSDLL…VITIDPPEDV (76 aa)). The disordered stretch occupies residues 165-185 (IDPPEDVGSKAEEEGGGAPDD).

The protein belongs to the RimM family. Binds ribosomal protein uS19.

The protein resides in the cytoplasm. An accessory protein needed during the final step in the assembly of 30S ribosomal subunit, possibly for assembly of the head region. Essential for efficient processing of 16S rRNA. May be needed both before and after RbfA during the maturation of 16S rRNA. It has affinity for free ribosomal 30S subunits but not for 70S ribosomes. The polypeptide is Ribosome maturation factor RimM (Maricaulis maris (strain MCS10) (Caulobacter maris)).